Here is a 648-residue protein sequence, read N- to C-terminus: ATP-dependent DNA helicase Q1 (648 aa).

In terms of domain architecture, Helicase ATP-binding spans 100–275; sequence INVTMARKDI…QKILCVGKCL (176 aa). 113-120 contacts ATP; sequence MPTGGGKS. Positions 219-222 match the DEVH box motif; it reads DEVH. Residues 299 to 451 form the Helicase C-terminal domain; it reads DFTEDIVKLI…EMVSYCQNVS (153 aa). The Zn(2+) site is built by Cys453, Cys471, Cys475, and Cys478. 2 positions are modified to N6-acetyllysine: Lys514 and Lys522. Phosphoserine is present on Ser597. The tract at residues 601-648 is disordered; it reads ALSEARQVEQVDSKGEEQSSGNSQKSKSRLQPSGSKNAGAKKRKLDDA. Basic and acidic residues predominate over residues 606–617; the sequence is RQVEQVDSKGEE. Polar residues predominate over residues 618 to 636; that stretch reads QSSGNSQKSKSRLQPSGSK. Phosphoserine is present on Ser633. Positions 639-648 are enriched in basic residues; that stretch reads GAKKRKLDDA.

This sequence belongs to the helicase family. RecQ subfamily. In terms of assembly, may form homodimers or higher order oligomers. Interacts with EXO1. Interacts with MLH1. Interacts with PARP1. Mg(2+) is required as a cofactor. Mn(2+) serves as cofactor. Requires Zn(2+) as cofactor. Expressed in all tissues examined. In terms of tissue distribution, only expressed in spermatocytes. Expression increases at pachytene (17 days old) and decreases after completion of meiosis II (7 weeks old).

It localises to the nucleus. The catalysed reaction is Couples ATP hydrolysis with the unwinding of duplex DNA by translocating in the 3'-5' direction.. The enzyme catalyses ATP + H2O = ADP + phosphate + H(+). It carries out the reaction dATP + H2O = dADP + phosphate + H(+). Functionally, DNA helicase that plays a role in DNA damage repair and genome stability. Exhibits a magnesium- and ATP-dependent DNA-helicase activity that unwinds single- and double-stranded DNA in a 3'-5' direction. Plays a role in restoring regressed replication forks. Required to restart stalled replication forks induced by abortive topoisomerase 1 and 2 lesions. May play a role in the repair of DNA that is damaged by ultraviolet light or other mutagens. This chain is ATP-dependent DNA helicase Q1 (Recql), found in Mus musculus (Mouse).